A 288-amino-acid chain; its full sequence is ATP synthase gamma chain (288 aa).

The protein belongs to the ATPase gamma chain family. F-type ATPases have 2 components, CF(1) - the catalytic core - and CF(0) - the membrane proton channel. CF(1) has five subunits: alpha(3), beta(3), gamma(1), delta(1), epsilon(1). CF(0) has three main subunits: a, b and c.

Its subcellular location is the cell inner membrane. Produces ATP from ADP in the presence of a proton gradient across the membrane. The gamma chain is believed to be important in regulating ATPase activity and the flow of protons through the CF(0) complex. The polypeptide is ATP synthase gamma chain (Rickettsia felis (strain ATCC VR-1525 / URRWXCal2) (Rickettsia azadi)).